Here is a 125-residue protein sequence, read N- to C-terminus: Small ribosomal subunit protein uS13 (125 aa).

The segment at 95–125 (GLPVNGQRTRTNARTRKGGKKTVANKKKVTK) is disordered. The span at 105–125 (TNARTRKGGKKTVANKKKVTK) shows a compositional bias: basic residues.

The protein belongs to the universal ribosomal protein uS13 family. In terms of assembly, part of the 30S ribosomal subunit. Forms a loose heterodimer with protein S19. Forms two bridges to the 50S subunit in the 70S ribosome.

In terms of biological role, located at the top of the head of the 30S subunit, it contacts several helices of the 16S rRNA. In the 70S ribosome it contacts the 23S rRNA (bridge B1a) and protein L5 of the 50S subunit (bridge B1b), connecting the 2 subunits; these bridges are implicated in subunit movement. Contacts the tRNAs in the A and P-sites. The chain is Small ribosomal subunit protein uS13 from Leptospira interrogans serogroup Icterohaemorrhagiae serovar copenhageni (strain Fiocruz L1-130).